The following is a 288-amino-acid chain: Peroxisomal membrane protein pex13 (288 aa).

Residues Met-1 to Gln-32 are disordered. Over residues Ser-22–Gln-32 the composition is skewed to polar residues. The helical transmembrane segment at Ile-178–Ile-198 threads the bilayer. In terms of domain architecture, SH3 spans Asp-222 to Arg-288.

Belongs to the peroxin-13 family. As to quaternary structure, interacts (via SH3 domain) with PEX14 (via SH3-binding motif); forming the PEX13-PEX14 docking complex.

Its subcellular location is the peroxisome membrane. Functionally, component of the PEX13-PEX14 docking complex, a translocon channel that specifically mediates the import of peroxisomal cargo proteins bound to PEX5 receptor. The PEX13-PEX14 docking complex forms a large import pore which can be opened to a diameter of about 9 nm. Mechanistically, PEX5 receptor along with cargo proteins associates with the PEX14 subunit of the PEX13-PEX14 docking complex in the cytosol, leading to the insertion of the receptor into the organelle membrane with the concomitant translocation of the cargo into the peroxisome matrix. This chain is Peroxisomal membrane protein pex13 (pex13), found in Schizosaccharomyces pombe (strain 972 / ATCC 24843) (Fission yeast).